The primary structure comprises 106 residues: HIG1 domain family member 2A, mitochondrial (106 aa).

Residue alanine 2 is modified to N-acetylalanine. The region spanning 20 to 106 (VIEGLSPTVY…LAVTAMKSRP (87 aa)) is the HIG1 domain. The next 2 membrane-spanning stretches (helical) occupy residues 47-67 (PVVP…LYSF) and 83-103 (IAAQ…TAMK). The Mitochondrial matrix portion of the chain corresponds to 104 to 106 (SRP).

As to quaternary structure, associates with cytochrome c oxidase (COX, complex IV); proposed complex component.

Its subcellular location is the mitochondrion membrane. It is found in the mitochondrion inner membrane. Its function is as follows. Proposed subunit of cytochrome c oxidase (COX, complex IV), which is the terminal component of the mitochondrial respiratory chain that catalyzes the reduction of oxygen to water. May be involved in cytochrome c oxidase activity. May play a role in the assembly of respiratory supercomplexes. This Homo sapiens (Human) protein is HIG1 domain family member 2A, mitochondrial (HIGD2A).